Consider the following 159-residue polypeptide: Serine-protein kinase RsbW (159 aa).

The protein belongs to the anti-sigma-factor family.

It catalyses the reaction L-seryl-[protein] + ATP = O-phospho-L-seryl-[protein] + ADP + H(+). The catalysed reaction is L-threonyl-[protein] + ATP = O-phospho-L-threonyl-[protein] + ADP + H(+). Its function is as follows. Negative regulator of sigma-B activity. Phosphorylates and inactivates its specific antagonist protein, RsbV. Upon phosphorylation of RsbV, RsbW is released and binds to sigma-B, thereby blocking its ability to form an RNA polymerase holoenzyme (E-sigma-B). In Staphylococcus epidermidis, this protein is Serine-protein kinase RsbW.